The following is a 94-amino-acid chain: MLQPIGDRVIVEVKEVEEQTVGGIVLASNAKEKPTQGKVVAVGGGLYAEDGSKLPMTVQEGDEVLYDKYSGTKVKYEDKEYLVLHEKDILAIVK.

This sequence belongs to the GroES chaperonin family. As to quaternary structure, heptamer of 7 subunits arranged in a ring. Interacts with the chaperonin GroEL.

It is found in the cytoplasm. In terms of biological role, together with the chaperonin GroEL, plays an essential role in assisting protein folding. The GroEL-GroES system forms a nano-cage that allows encapsulation of the non-native substrate proteins and provides a physical environment optimized to promote and accelerate protein folding. GroES binds to the apical surface of the GroEL ring, thereby capping the opening of the GroEL channel. In Lactobacillus delbrueckii subsp. bulgaricus (strain ATCC BAA-365 / Lb-18), this protein is Co-chaperonin GroES.